A 97-amino-acid polypeptide reads, in one-letter code: uncharacterized protein (97 aa).

A compositionally biased stretch (basic and acidic residues) spans 1-20 (MAKEQTDRTTLDLFAHERRP). The tract at residues 1 to 30 (MAKEQTDRTTLDLFAHERRPGRPKTNPLSR) is disordered.

This is an uncharacterized protein from Escherichia coli O157:H7.